The chain runs to 66 residues: Prophage transcriptional regulatory protein (66 aa).

The protein is Prophage transcriptional regulatory protein (croE) of Escherichia coli (strain K12).